Reading from the N-terminus, the 309-residue chain is Ribonuclease Z (309 aa).

Zn(2+) is bound by residues His-63, His-65, Asp-67, His-68, His-145, Asp-216, and His-274. The active-site Proton acceptor is the Asp-67.

Belongs to the RNase Z family. As to quaternary structure, homodimer. The cofactor is Zn(2+).

It catalyses the reaction Endonucleolytic cleavage of RNA, removing extra 3' nucleotides from tRNA precursor, generating 3' termini of tRNAs. A 3'-hydroxy group is left at the tRNA terminus and a 5'-phosphoryl group is left at the trailer molecule.. Functionally, zinc phosphodiesterase, which displays some tRNA 3'-processing endonuclease activity. Probably involved in tRNA maturation, by removing a 3'-trailer from precursor tRNA. This chain is Ribonuclease Z, found in Streptococcus thermophilus (strain CNRZ 1066).